The sequence spans 130 residues: MTTKRKAYVRTMAPNWWQQLGFYRFYMLREGTSIPAVWFSVLLIYGVFALKSGPAGWEGFVSFLQNPLVLFLNILTLFAALLHTKTWFELAPKAVNIIVKSEKMGPEPMIKALWVVTVVASAIILAVALL.

Helical transmembrane passes span 30 to 50, 60 to 80, and 110 to 130; these read EGTS…VFAL, FVSF…LFAA, and IKAL…VALL.

The protein belongs to the FrdC family. Part of an enzyme complex containing four subunits: a flavoprotein (FrdA), an iron-sulfur protein (FrdB), and two hydrophobic anchor proteins (FrdC and FrdD).

Its subcellular location is the cell inner membrane. Two distinct, membrane-bound, FAD-containing enzymes are responsible for the catalysis of fumarate and succinate interconversion; fumarate reductase is used in anaerobic growth, and succinate dehydrogenase is used in aerobic growth. Anchors the catalytic components of the fumarate reductase complex to the cell inner membrane, binds quinones. This Yersinia pseudotuberculosis serotype O:1b (strain IP 31758) protein is Fumarate reductase subunit C.